Consider the following 123-residue polypeptide: Small ribosomal subunit protein uS13 (123 aa).

A disordered region spans residues 97 to 123 (PVRGQRTKTNARTRKGPRKTVGVRRKK).

It belongs to the universal ribosomal protein uS13 family. As to quaternary structure, part of the 30S ribosomal subunit. Forms a loose heterodimer with protein S19. Forms two bridges to the 50S subunit in the 70S ribosome.

In terms of biological role, located at the top of the head of the 30S subunit, it contacts several helices of the 16S rRNA. In the 70S ribosome it contacts the 23S rRNA (bridge B1a) and protein L5 of the 50S subunit (bridge B1b), connecting the 2 subunits; these bridges are implicated in subunit movement. Contacts the tRNAs in the A and P-sites. This is Small ribosomal subunit protein uS13 from Pelotomaculum thermopropionicum (strain DSM 13744 / JCM 10971 / SI).